The following is a 436-amino-acid chain: 3-ketoacyl-CoA thiolase (436 aa).

Catalysis depends on cysteine 99, which acts as the Acyl-thioester intermediate. Catalysis depends on proton acceptor residues histidine 392 and cysteine 422.

This sequence belongs to the thiolase-like superfamily. Thiolase family. As to quaternary structure, heterotetramer of two alpha chains (FadJ) and two beta chains (FadI).

The protein resides in the cytoplasm. It carries out the reaction an acyl-CoA + acetyl-CoA = a 3-oxoacyl-CoA + CoA. It functions in the pathway lipid metabolism; fatty acid beta-oxidation. Catalyzes the final step of fatty acid oxidation in which acetyl-CoA is released and the CoA ester of a fatty acid two carbons shorter is formed. The chain is 3-ketoacyl-CoA thiolase from Escherichia coli O7:K1 (strain IAI39 / ExPEC).